We begin with the raw amino-acid sequence, 84 residues long: Large ribosomal subunit protein bL31B (84 aa).

Belongs to the bacterial ribosomal protein bL31 family. Type B subfamily. In terms of assembly, part of the 50S ribosomal subunit.

Its function is as follows. Binds the 23S rRNA. This chain is Large ribosomal subunit protein bL31B, found in Rhodococcus jostii (strain RHA1).